The primary structure comprises 421 residues: ATP-dependent RNA helicase RhlB (421 aa).

Residues 9–37 carry the Q motif motif; it reads QKFSDFALHPAVIEALEKKGFHNCTPIQA. The region spanning 40–219 is the Helicase ATP-binding domain; it reads LPLTLEGRDV…FEQMNNAEYV (180 aa). 53 to 60 is a binding site for ATP; the sequence is AQTGTGKT. The DEAD box motif lies at 165-168; that stretch reads DEAD. In terms of domain architecture, Helicase C-terminal spans 245 to 390; sequence RLLQTLLEEE…VSKYNPDALM (146 aa). The tract at residues 396–421 is disordered; that stretch reads PLRLTRARPGNGPRRNGPPRNRRRSG. Low complexity predominate over residues 403–414; that stretch reads RPGNGPRRNGPP.

The protein belongs to the DEAD box helicase family. RhlB subfamily. In terms of assembly, component of the RNA degradosome, which is a multiprotein complex involved in RNA processing and mRNA degradation.

It is found in the cytoplasm. The catalysed reaction is ATP + H2O = ADP + phosphate + H(+). Functionally, DEAD-box RNA helicase involved in RNA degradation. Has RNA-dependent ATPase activity and unwinds double-stranded RNA. The chain is ATP-dependent RNA helicase RhlB from Klebsiella pneumoniae (strain 342).